A 339-amino-acid chain; its full sequence is Formyl peptide receptor-related sequence 6 (339 aa).

Topologically, residues 1–23 (MEANFSIPQNGSEVVFYDSTTSR) are extracellular. Asparagine 4 and asparagine 10 each carry an N-linked (GlcNAc...) asparagine glycan. Residues 24-44 (VICIFLVVVLSITFLLGVIGN) form a helical membrane-spanning segment. Residues 45 to 62 (GLVIYVAGFRMTHTVTTI) are Cytoplasmic-facing. A helical membrane pass occupies residues 63 to 85 (CYLNLALSDFSYMASLPFQITSI). Residues 86–99 (VMNGEWLFGWFLCK) lie on the Extracellular side of the membrane. Cysteine 98 and cysteine 178 are oxidised to a cystine. A helical transmembrane segment spans residues 100 to 120 (FVHMIINVNLFLSIFLITFIA). Residues 121-144 (MDRCICVLHPVWAQNHRTVNVATK) lie on the Cytoplasmic side of the membrane. A helical transmembrane segment spans residues 145 to 165 (VIFGAWILVLMLIFPHCIFVT). Residues 166 to 198 (TVKDESGKVHCICNFESWAATPEEQVKVSMTVS) are Extracellular-facing. A helical transmembrane segment spans residues 199 to 219 (LISVTISFIIGFSIPMIFIVI). The Cytoplasmic portion of the chain corresponds to 220 to 241 (CYGLMAAKIGRRGFVNSSRPLR). The helical transmembrane segment at 242–262 (VLTAVAISFFVCWFPFQLIFL) threads the bilayer. The Extracellular portion of the chain corresponds to 263-280 (LGNIGNKETQNNIDTWVN). The chain crosses the membrane as a helical span at residues 281 to 301 (TASTLASFNSCLNPILYVFLG). Residues 302-339 (QQFRERLIYSLSASLERALREDSALNSDKTRNLSSQRL) lie on the Cytoplasmic side of the membrane.

This sequence belongs to the G-protein coupled receptor 1 family. Expressed exclusively in vomeronasal tissue. Expressed in 1.2 % of a subset of sensory neurons located in the apical layer of the vomeronasal organ. Each neuron appears to express only one receptor gene. Expressed in brain, spleen, skeletal muscle and at high level in testis.

The protein localises to the membrane. Its function is as follows. May have an olfactory function associated with the identification of pathogens or of pathogenic states. In Mus musculus (Mouse), this protein is Formyl peptide receptor-related sequence 6 (Fpr-rs6).